We begin with the raw amino-acid sequence, 568 residues long: Putative U-box domain-containing protein 55 (568 aa).

Residues Gln217 to Ser464 are a coiled coil. Residues Gln496–Ser568 form the U-box domain.

It catalyses the reaction S-ubiquitinyl-[E2 ubiquitin-conjugating enzyme]-L-cysteine + [acceptor protein]-L-lysine = [E2 ubiquitin-conjugating enzyme]-L-cysteine + N(6)-ubiquitinyl-[acceptor protein]-L-lysine.. Its pathway is protein modification; protein ubiquitination. Its function is as follows. Functions as an E3 ubiquitin ligase. The polypeptide is Putative U-box domain-containing protein 55 (PUB55) (Arabidopsis thaliana (Mouse-ear cress)).